Consider the following 348-residue polypeptide: Serpentine receptor class alpha-29 (348 aa).

The next 6 membrane-spanning stretches (helical) occupy residues 28–48 (FILM…QTLW), 108–130 (FLYY…DRLF), 145–165 (GFIV…FWTF), 193–213 (INDS…FLYI), 246–266 (CIII…PSIF), and 280–300 (LILA…LIVI).

This sequence belongs to the nematode receptor-like protein sra family.

The protein resides in the membrane. In Caenorhabditis elegans, this protein is Serpentine receptor class alpha-29 (sra-29).